Consider the following 332-residue polypeptide: Trace amine-associated receptor 1 (332 aa).

Topologically, residues Met-1–Ala-23 are extracellular. A glycan (N-linked (GlcNAc...) asparagine) is linked at Asn-9. The chain crosses the membrane as a helical span at residues Ser-24–Ser-48. The Cytoplasmic portion of the chain corresponds to His-49–Asn-58. Residues Trp-59–Met-80 form a helical membrane-spanning segment. Over Val-81–Cys-95 the chain is Extracellular. An intrachain disulfide couples Cys-95 to Cys-181. Residues Lys-96 to Ile-118 traverse the membrane as a helical segment. Residue Asp-102 participates in 2-phenylethylamine binding. The Cytoplasmic portion of the chain corresponds to Asp-119–Thr-138. The chain crosses the membrane as a helical span at residues Ile-139–Leu-160. The Extracellular portion of the chain corresponds to Glu-161 to Lys-187. The extracellular Loop 2 (ECL2) stretch occupies residues Gln-174 to Phe-185. Residues Val-188–Tyr-210 traverse the membrane as a helical segment. The Cytoplasmic segment spans residues Arg-211 to Ala-246. A helical membrane pass occupies residues Ala-247–Leu-270. Over Asp-271–Asn-283 the chain is Extracellular. A helical transmembrane segment spans residues Asp-284–Phe-304. At Tyr-305–Leu-332 the chain is on the cytoplasmic side.

It belongs to the G-protein coupled receptor 1 family. In terms of tissue distribution, widely distributed throughout the brain. Strongly expressed in the mitral cell layer of the olfactory bulb, piriform cortex, the arcuate, motor, and mesencephalic trigeminal nuclei, lateral reticular and hypoglossal nuclei, cerebellar Purkinje cells, and ventral horn of the spinal cord. Moderately expressed in the frontal, entorhinal, and agranular cortices, the ventral pallidum, thalamus, hippocampus, several hypothalamic nuclei, ambiguus, dorsal raphe, and gigantocellular reticular nuclei. Weakly expressed in the septum, basal ganglia, amygdala, myelencephalon, and spinal cord dorsal horn. Particularly interesting is the moderate expression in several monoaminergic cell groups, namely the dorsal raphe, the locus coeruleus, and the ventral tegmental area.

The protein localises to the endomembrane system. It localises to the endoplasmic reticulum membrane. The protein resides in the cell membrane. With respect to regulation, activated by SEP-363856 small molecule: IHCH-7179 acts both as an agonist activator for HTR1A and TAAR1. Intracellular G-protein coupled receptor for trace amines, which recognizes endogenous amine-containing metabolites such as beta-phenylethylamine (beta-PEA), 3-iodothyronamine (T1AM), isoamylamine (IAA), cadaverine (CAD), cyclohexylamine (CHA), p-tyramine (p-TYR), trimethylamine (TMA), octopamine and tryptamine. Also functions as a receptor for various drugs and psychoactive substances, such as amphetamine and methamphetamine. Unresponsive to classical biogenic amines, such as epinephrine and histamine and only partially activated by dopamine and serotonin. Expressed in both the central and peripheral nervous system: TAAR1 activation regulates the activity of several neurotransmitter signaling pathways by (1) decreasing the basal firing rates of the neurons involved and by (2) lowering the sensitivity of receptors to neurotransmitters. Ligand binding causes a conformation change that triggers signaling via guanine nucleotide-binding proteins (G proteins) and modulates the activity of downstream effectors. TAAR1 is coupled with different G(i)/G(o)-, G(s)- or G(q)/G(11) classes of G alpha proteins depending on the ligand. CAD-binding is coupled to G(i)/G(o) G alpha proteins and mediates inhibition of adenylate cyclase activity. T1AM- or beta-PEA-binding is coupled to G(s) G alpha proteins and mediates activation of adenylate cyclase activity. CHA- or IAA-binding is coupled to G(q)/G(11) G alpha proteins and activates phospholipase C-beta, releasing diacylglycerol (DAG) and inositol 1,4,5-trisphosphate (IP3) second messengers. TMA-binding is coupled with all three G(i)/G(o)-, G(s)- or G(q)/G(11) G alpha protein subtypes. This Mus musculus (Mouse) protein is Trace amine-associated receptor 1.